A 126-amino-acid polypeptide reads, in one-letter code: Ribosome-binding factor A (126 aa).

Belongs to the RbfA family. As to quaternary structure, monomer. Binds 30S ribosomal subunits, but not 50S ribosomal subunits or 70S ribosomes.

It localises to the cytoplasm. In terms of biological role, one of several proteins that assist in the late maturation steps of the functional core of the 30S ribosomal subunit. Associates with free 30S ribosomal subunits (but not with 30S subunits that are part of 70S ribosomes or polysomes). Required for efficient processing of 16S rRNA. May interact with the 5'-terminal helix region of 16S rRNA. The protein is Ribosome-binding factor A of Halorhodospira halophila (strain DSM 244 / SL1) (Ectothiorhodospira halophila (strain DSM 244 / SL1)).